Here is a 209-residue protein sequence, read N- to C-terminus: MTGKKRSASSSRWLQEHFSDKYVQQAQKKGLRSRAWFKLDEIQQSDKIFKPGMTVVDLGAAPGGWSQYVVTQIGGAGRIIACDLLPMDPIVGVDFLQGDFRDELVMKALLERVGDSKVQVVMSDMAPNMSGTPAVDIPRAMYLVELALEMCRDVLAPGGSFVVKVFQGEGFDEYLREIRSLFTKVKVRKPDSSRARSREVYIVATGRKL.

Positions 63, 65, 83, 99, and 124 each coordinate S-adenosyl-L-methionine. Lys-164 (proton acceptor) is an active-site residue.

The protein belongs to the class I-like SAM-binding methyltransferase superfamily. RNA methyltransferase RlmE family.

It localises to the cytoplasm. It carries out the reaction uridine(2552) in 23S rRNA + S-adenosyl-L-methionine = 2'-O-methyluridine(2552) in 23S rRNA + S-adenosyl-L-homocysteine + H(+). In terms of biological role, specifically methylates the uridine in position 2552 of 23S rRNA at the 2'-O position of the ribose in the fully assembled 50S ribosomal subunit. This is Ribosomal RNA large subunit methyltransferase E from Cronobacter sakazakii (strain ATCC BAA-894) (Enterobacter sakazakii).